Consider the following 314-residue polypeptide: Olfactory receptor 5G3 (314 aa).

The Extracellular segment spans residues 1–24 (MEDKNQTVVTEFLLLGLTDHPYQK). Asn-5 carries N-linked (GlcNAc...) asparagine glycosylation. A helical transmembrane segment spans residues 25–45 (IVLFFMFLFVYLITLGGNLGM). Residues 46-97 (ITLIWIDPRLHTPMYFFLRHLSFVDICSSSSVVPKMLCNIFAEKKDITFLGC) are Cytoplasmic-facing. Cys-97 and Cys-179 are joined by a disulfide. Residues 98–118 (AAQMWFFGLFEAAECFLLAAM) traverse the membrane as a helical segment. Over 119-143 (AYDRYVAICKPLLYTLIMSQQVCMQ) the chain is Extracellular. The chain crosses the membrane as a helical span at residues 144–164 (LVVGPYAMALISTMTHTIFTF). Over 165-167 (CLP) the chain is Cytoplasmic. The chain crosses the membrane as a helical span at residues 168-188 (FCGSNIINHFFCDIFPLLSLA). Over 189-196 (CADTWVNK) the chain is Extracellular. A helical membrane pass occupies residues 197 to 217 (FVLFVLAGAIGVLSGLIIMVS). Residues 218–237 (YICILMTILKIQTADGKQKA) are Cytoplasmic-facing. The chain crosses the membrane as a helical span at residues 238 to 258 (FFTCFSHLAAVSILYGTLFLI). Over 259–268 (YVRPSSSSSL) the chain is Extracellular. A helical transmembrane segment spans residues 269–289 (GIYKVISLFYTVVIPMVNPLI). Over 290–314 (YSLRNKEVKDAFRRKIERKKFIIGR) the chain is Cytoplasmic.

This sequence belongs to the G-protein coupled receptor 1 family.

It is found in the cell membrane. Its function is as follows. Odorant receptor. This Homo sapiens (Human) protein is Olfactory receptor 5G3 (OR5G3).